A 123-amino-acid chain; its full sequence is Small ribosomal subunit protein uS12 (123 aa).

A disordered region spans residues Met1–Gly32. Residues Arg9–Val19 are compositionally biased toward basic residues. 3-methylthioaspartic acid is present on Asp89.

Belongs to the universal ribosomal protein uS12 family. As to quaternary structure, part of the 30S ribosomal subunit. Contacts proteins S8 and S17. May interact with IF1 in the 30S initiation complex.

Functionally, with S4 and S5 plays an important role in translational accuracy. Interacts with and stabilizes bases of the 16S rRNA that are involved in tRNA selection in the A site and with the mRNA backbone. Located at the interface of the 30S and 50S subunits, it traverses the body of the 30S subunit contacting proteins on the other side and probably holding the rRNA structure together. The combined cluster of proteins S8, S12 and S17 appears to hold together the shoulder and platform of the 30S subunit. This chain is Small ribosomal subunit protein uS12, found in Corynebacterium kroppenstedtii (strain DSM 44385 / JCM 11950 / CIP 105744 / CCUG 35717).